A 101-amino-acid chain; its full sequence is Non-histone chromosomal protein HMG-14 (101 aa).

The segment at 1-101 is disordered; sequence MPKRKVSSAE…EAEEKEAKSD (101 aa). An ADP-ribosylserine modification is found at Ser7. Position 8 is a phosphoserine (Ser8). Lys14 carries the post-translational modification N6-acetyllysine. A Phosphoserine modification is found at Ser21. Ser25 is modified (ADP-ribosylserine; alternate). Ser25 bears the Phosphoserine; alternate mark. An N6-acetyllysine modification is found at Lys27. Composition is skewed to basic and acidic residues over residues 33–51 and 70–86; these read VETK…DKKV and ETKE…KNEE. At Thr82 the chain carries Phosphothreonine. An N6-acetyllysine modification is found at Lys83. Phosphoserine is present on residues Ser87, Ser90, and Ser100.

Belongs to the HMGN family. As to quaternary structure, interacts with transcriptional regulator SEHBP. Phosphorylation on Ser-21 and Ser-25 weakens binding to nucleosomes and increases the rate of H3 phosphorylation.

The protein resides in the nucleus. In terms of biological role, binds to the inner side of the nucleosomal DNA thus altering the interaction between the DNA and the histone octamer. May be involved in the process which maintains transcribable genes in a unique chromatin conformation. Inhibits the phosphorylation of nucleosomal histones H3 and H2A by RPS6KA5/MSK1 and RPS6KA3/RSK2. This Bos taurus (Bovine) protein is Non-histone chromosomal protein HMG-14 (HMGN1).